The sequence spans 832 residues: Golgin subfamily A member 6-like protein 24 (832 aa).

Disordered stretches follow at residues methionine 1–leucine 107, glutamine 303–glutamine 333, methionine 351–arginine 431, glutamine 508–glutamate 652, and glutamine 664–histidine 832. The segment covering leucine 13–threonine 27 has biased composition (basic residues). Positions methionine 37 to proline 58 are enriched in basic and acidic residues. Polar residues-rich tracts occupy residues glutamine 59 to serine 69 and asparagine 77 to glycine 89. Residues serine 92 to leucine 107 are compositionally biased toward basic and acidic residues. Residues leucine 163–lysine 828 are a coiled coil. 2 stretches are compositionally biased toward basic and acidic residues: residues glutamine 664–glutamate 684 and glutamine 692–histidine 832.

This sequence belongs to the GOLGA6 family.

This is Golgin subfamily A member 6-like protein 24 from Homo sapiens (Human).